The sequence spans 286 residues: Elongation factor Ts (286 aa).

Residues 82–85 are involved in Mg(2+) ion dislocation from EF-Tu; the sequence is TDFV.

Belongs to the EF-Ts family.

It localises to the cytoplasm. Its function is as follows. Associates with the EF-Tu.GDP complex and induces the exchange of GDP to GTP. It remains bound to the aminoacyl-tRNA.EF-Tu.GTP complex up to the GTP hydrolysis stage on the ribosome. The protein is Elongation factor Ts of Desulfovibrio desulfuricans (strain ATCC 27774 / DSM 6949 / MB).